The following is a 41-amino-acid chain: Tachystatin-C (41 aa).

3 disulfides stabilise this stretch: cysteine 12-cysteine 28, cysteine 19-cysteine 33, and cysteine 27-cysteine 38.

In terms of tissue distribution, granular hemocytes, small secretory granules.

It localises to the secreted. Functionally, binds to chitin. Shows strong activity against E.coli (IC(50) is 1.2 ug/ml). Is also very active against S.aureus (IC(50) is 0.8 ug/ml), C.albicans (IC(50) is 0.9 ug/ml) and P.pastoris (IC(50) is 0.3 ug/ml). Binds to chitin (5.2 uM are required to obtain 50% of binding). Causes hemolysis on sheep erythrocytes, probably by forming ion-permeable pores. The protein is Tachystatin-C of Tachypleus tridentatus (Japanese horseshoe crab).